Reading from the N-terminus, the 384-residue chain is 1-deoxy-D-xylulose 5-phosphate reductoisomerase (384 aa).

NADPH contacts are provided by Thr-11, Gly-12, Ser-13, Ile-14, Lys-38, and Asn-123. Lys-124 is a 1-deoxy-D-xylulose 5-phosphate binding site. Glu-125 is a binding site for NADPH. Asp-148 contacts Mn(2+). The 1-deoxy-D-xylulose 5-phosphate site is built by Ser-149, Glu-150, Ser-174, and His-197. Residue Glu-150 participates in Mn(2+) binding. Position 203 (Gly-203) interacts with NADPH. 1-deoxy-D-xylulose 5-phosphate-binding residues include Ser-210, Asn-215, Lys-216, and Glu-219. Glu-219 lines the Mn(2+) pocket.

The protein belongs to the DXR family. It depends on Mg(2+) as a cofactor. Requires Mn(2+) as cofactor.

It catalyses the reaction 2-C-methyl-D-erythritol 4-phosphate + NADP(+) = 1-deoxy-D-xylulose 5-phosphate + NADPH + H(+). Its pathway is isoprenoid biosynthesis; isopentenyl diphosphate biosynthesis via DXP pathway; isopentenyl diphosphate from 1-deoxy-D-xylulose 5-phosphate: step 1/6. Its function is as follows. Catalyzes the NADPH-dependent rearrangement and reduction of 1-deoxy-D-xylulose-5-phosphate (DXP) to 2-C-methyl-D-erythritol 4-phosphate (MEP). The chain is 1-deoxy-D-xylulose 5-phosphate reductoisomerase from Halothermothrix orenii (strain H 168 / OCM 544 / DSM 9562).